The chain runs to 465 residues: Cysteine--tRNA ligase (465 aa).

Cys27 contributes to the Zn(2+) binding site. The 'HIGH' region motif lies at 29–39 (PTTYNYIHIGN). Zn(2+) contacts are provided by Cys207, His232, and Glu236. The 'KMSKS' region motif lies at 264–268 (KMSKS). Residue Lys267 participates in ATP binding.

This sequence belongs to the class-I aminoacyl-tRNA synthetase family. As to quaternary structure, monomer. Requires Zn(2+) as cofactor.

Its subcellular location is the cytoplasm. It carries out the reaction tRNA(Cys) + L-cysteine + ATP = L-cysteinyl-tRNA(Cys) + AMP + diphosphate. The polypeptide is Cysteine--tRNA ligase (Carboxydothermus hydrogenoformans (strain ATCC BAA-161 / DSM 6008 / Z-2901)).